A 582-amino-acid polypeptide reads, in one-letter code: MITRMSQLFLRTLRDDPADAEVPSHKLLIRAGYIRPVAPGLYSWLPLGLRVLRRIEHIVREEMNAIGGQEILFPALLPRAPYEATNRWTEYGDSVFRLQDRRGNDYLLGPTHEELFTLTVKGEYSSYKDFPVLLYQIQNKYRDEARPRAGILRVREFVMKDSYSFDIDDAGLKAAYHAHREAYQRIFARLQVRYVIVSAVSGAMGGSASEEFLAESPVGEDTFVRCLESGYAANVEAVITARPDPQPVEGLPEAVVHDTGDTPTIATLVDWANRAGLGRTVTAADTLKNVLLKVRQPGGDWELLAIGLPGDREVDDKRLGAALEPAEYVLLDDADFARYPFLVKGYIGPKALKDNGVRYLVDPRVVDGTSWITGADEPGRHVVGLVAGRDFTADGTIEAAEVRDGDPSPDGAGPLVSARGIEVAHIFQLGRKYTDAFTADVLGEDGKPVRLTMGSYGLGVSRMVAVIAEQHHDELGLRWPASVAPFDVHLVIANKDAQARAGATALADDLDRLGVEVLLDDRQASPGVKFKDAELLGVPWIVVVGRGWADGVVELRDRFAGQTRELATGPSLAADIAAALRG.

This sequence belongs to the class-II aminoacyl-tRNA synthetase family. ProS type 1 subfamily. In terms of assembly, homodimer.

It localises to the cytoplasm. It catalyses the reaction tRNA(Pro) + L-proline + ATP = L-prolyl-tRNA(Pro) + AMP + diphosphate. In terms of biological role, catalyzes the attachment of proline to tRNA(Pro) in a two-step reaction: proline is first activated by ATP to form Pro-AMP and then transferred to the acceptor end of tRNA(Pro). As ProRS can inadvertently accommodate and process non-cognate amino acids such as alanine and cysteine, to avoid such errors it has two additional distinct editing activities against alanine. One activity is designated as 'pretransfer' editing and involves the tRNA(Pro)-independent hydrolysis of activated Ala-AMP. The other activity is designated 'posttransfer' editing and involves deacylation of mischarged Ala-tRNA(Pro). The misacylated Cys-tRNA(Pro) is not edited by ProRS. This is Proline--tRNA ligase from Mycobacterium avium (strain 104).